The chain runs to 60 residues: Ribosome modulation factor (60 aa).

This sequence belongs to the ribosome modulation factor family.

It is found in the cytoplasm. During stationary phase, converts 70S ribosomes to an inactive dimeric form (100S ribosomes). The polypeptide is Ribosome modulation factor (Kangiella koreensis (strain DSM 16069 / JCM 12317 / KCTC 12182 / SW-125)).